A 347-amino-acid chain; its full sequence is Phosphoribosylformylglycinamidine cyclo-ligase (347 aa).

The protein belongs to the AIR synthase family.

The protein resides in the cytoplasm. It carries out the reaction 2-formamido-N(1)-(5-O-phospho-beta-D-ribosyl)acetamidine + ATP = 5-amino-1-(5-phospho-beta-D-ribosyl)imidazole + ADP + phosphate + H(+). Its pathway is purine metabolism; IMP biosynthesis via de novo pathway; 5-amino-1-(5-phospho-D-ribosyl)imidazole from N(2)-formyl-N(1)-(5-phospho-D-ribosyl)glycinamide: step 2/2. The polypeptide is Phosphoribosylformylglycinamidine cyclo-ligase (Prochlorococcus marinus (strain MIT 9301)).